A 111-amino-acid polypeptide reads, in one-letter code: uncharacterized protein (111 aa).

The protein belongs to the SUI1 family.

This is an uncharacterized protein from Synechocystis sp. (strain ATCC 27184 / PCC 6803 / Kazusa).